A 92-amino-acid polypeptide reads, in one-letter code: MHESNTLYGGPMTKLRQAINQVLAAVLLAGIGFYRRFISPMIGPRCRFTPTCSAYGLEAIQKHGPWKGGWLTVKRLLRCHPFTPCGCDPVPD.

The protein belongs to the UPF0161 family.

It localises to the cell inner membrane. Could be involved in insertion of integral membrane proteins into the membrane. The sequence is that of Putative membrane protein insertion efficiency factor from Synechococcus sp. (strain CC9605).